Consider the following 1337-residue polypeptide: MKPAAREARLPPRSPGLRWALPLLLLLLRLGQILCAGGTPSPIPDPSVATVATGENGITQISSTAESFHKQNGTGTPQVETNTSEDGESSGANDSLRTPEQGSNGTDGASQKTPSSTGPSPVFDIKAVSISPTNVILTWKSNDTAASEYKYVVKHKMENEKTITVVHQPWCNITGLRPATSYVFSITPGIGNETWGDPRVIKVITEPIPVSDLRVALTGVRKAALSWSNGNGTASCRVLLESIGSHEELTQDSRLQVNISGLKPGVQYNINPYLLQSNKTKGDPLGTEGGLDASNTERSRAGSPTAPVHDESLVGPVDPSSGQQSRDTEVLLVGLEPGTRYNATVYSQAANGTEGQPQAIEFRTNAIQVFDVTAVNISATSLTLIWKVSDNESSSNYTYKIHVAGETDSSNLNVSEPRAVIPGLRSSTFYNITVCPVLGDIEGTPGFLQVHTPPVPVSDFRVTVVSTTEIGLAWSSHDAESFQMHITQEGAGNSRVEITTNQSIIIGGLFPGTKYCFEIVPKGPNGTEGASRTVCNRTVPSAVFDIHVVYVTTTEMWLDWKSPDGASEYVYHLVIESKHGSNHTSTYDKAITLQGLIPGTLYNITISPEVDHVWGDPNSTAQYTRPSNVSNIDVSTNTTAATLSWQNFDDASPTYSYCLLIEKAGNSSNATQVVTDIGITDATVTELIPGSSYTVEIFAQVGDGIKSLEPGRKSFCTDPASMASFDCEVVPKEPALVLKWTCPPGANAGFELEVSSGAWNNATHLESCSSENGTEYRTEVTYLNFSTSYNISITTVSCGKMAAPTRNTCTTGITDPPPPDGSPNITSVSHNSVKVKFSGFEASHGPIKAYAVILTTGEAGHPSADVLKYTYEDFKKGASDTYVTYLIRTEEKGRSQSLSEVLKYEIDVGNESTTLGYYNGKLEPLGSYRACVAGFTNITFHPQNKGLIDGAESYVSFSRYSDAVSLPQDPGVICGAVFGCIFGALVIVTVGGFIFWRKKRKDAKNNEVSFSQIKPKKSKLIRVENFEAYFKKQQADSNCGFAEEYEDLKLVGISQPKYAAELAENRGKNRYNNVLPYDISRVKLSVQTHSTDDYINANYMPGYHSKKDFIATQGPLPNTLKDFWRMVWEKNVYAIIMLTKCVEQGRTKCEEYWPSKQAQDYGDITVAMTSEIVLPEWTIRDFTVKNIQTSESHPLRQFHFTSWPDHGVPDTTDLLINFRYLVRDYMKQSPPESPILVHCSAGVGRTGTFIAIDRLIYQIENENTVDVYGIVYDLRMHRPLMVQTEDQYVFLNQCVLDIVRSQKDSKVDLIYQNTTAMTIYENLAPVTTFGKTNGYIA.

Residues 1 to 35 (MKPAAREARLPPRSPGLRWALPLLLLLLRLGQILC) form the signal peptide. The Extracellular portion of the chain corresponds to 36 to 975 (AGGTPSPIPD…LPQDPGVICG (940 aa)). 2 stretches are compositionally biased toward polar residues: residues 67–82 (SFHKQNGTGTPQVETN) and 89–119 (SSGANDSLRTPEQGSNGTDGASQKTPSSTGP). Residues 67–124 (SFHKQNGTGTPQVETNTSEDGESSGANDSLRTPEQGSNGTDGASQKTPSSTGPSPVFD) form a disordered region. Residues Asn72, Asn82, Asn93, Asn104, Asn142, Asn172, Asn192, Asn231, Asn258, Asn278, Asn342, Asn351, Asn376, Asn391, Asn396, Asn413, Asn431, Asn501, Asn525, Asn536, Asn582, Asn603, Asn618, Asn628, Asn637, Asn666, Asn669, Asn761, Asn772, Asn784, Asn790, Asn824, Asn910, and Asn937 are each glycosylated (N-linked (GlcNAc...) asparagine). Fibronectin type-III domains follow at residues 121-209 (PVFD…EPIP), 207-291 (PIPV…EGGL), 271-364 (NPYL…EFRT), 368-456 (QVFD…PPVP), 457-541 (VSDF…TVPS), 542-623 (AVFD…TAQY), 625-720 (RPSN…TDPA), 721-817 (SMAS…TDPP), and 816-902 (PPPP…SEVL). Residues 278 to 327 (NKTKGDPLGTEGGLDASNTERSRAGSPTAPVHDESLVGPVDPSSGQQSRD) are disordered. Residues 976-996 (AVFGCIFGALVIVTVGGFIFW) traverse the membrane as a helical segment. Over 997 to 1337 (RKKRKDAKNN…TFGKTNGYIA (341 aa)) the chain is Cytoplasmic. Phosphoserine is present on Ser1009. The 258-residue stretch at 1041–1298 (FAEEYEDLKL…VFLNQCVLDI (258 aa)) folds into the Tyrosine-protein phosphatase domain. Residues Asp1205, 1239–1245 (CSAGVGR), and Gln1283 contribute to the substrate site. Residue Cys1239 is the Phosphocysteine intermediate of the active site.

The protein belongs to the protein-tyrosine phosphatase family. Receptor class 3 subfamily. Monomer. Interacts with CTNNB1 (phosphorylated) and JUP (phosphorylated). Interacts with FLT3 (phosphorylated). Interacts with GAB1 and GRB2. In terms of processing, N- and O-glycosylated. Post-translationally, N-glycosylated. As to expression, expressed in the promyelocytic cell line HL-60, the granulocyte-macrophage colony-stimulating factor-dependent leukemic cell line F-36P, and the IL3 and erythropoietin-dependent leukemic cell line F-36E. Expressed predominantly in epithelial cells and lymphocytes. Enhanced expression at high cell density. In terms of tissue distribution, expressed in the brain.

The protein resides in the cell membrane. It localises to the cell projection. The protein localises to the ruffle membrane. It is found in the cell junction. Its subcellular location is the secreted. The protein resides in the extracellular space. It carries out the reaction O-phospho-L-tyrosyl-[protein] + H2O = L-tyrosyl-[protein] + phosphate. In terms of biological role, tyrosine phosphatase which dephosphorylates or contributes to the dephosphorylation of CTNND1, FLT3, PDGFRB, MET, KDR, LYN, SRC, MAPK1, MAPK3, EGFR, TJP1, OCLN, PIK3R1 and PIK3R2. Plays a role in cell adhesion, migration, proliferation and differentiation. Has a role in megakaryocytes and platelet formation. Involved in vascular development. Regulator of macrophage adhesion and spreading. Positively affects cell-matrix adhesion. Positive regulator of platelet activation and thrombosis. Negative regulator of cell proliferation. Negative regulator of PDGF-stimulated cell migration; through dephosphorylation of PDGFR. Positive regulator of endothelial cell survival, as well as of VEGF-induced SRC and AKT activation; through KDR dephosphorylation. Negative regulator of EGFR signaling pathway; through EGFR dephosphorylation. Enhances the barrier function of epithelial junctions during reassembly. Negatively regulates T-cell receptor (TCR) signaling. Upon T-cell TCR activation, it is up-regulated and excluded from the immunological synapses, while upon T-cell-antigen presenting cells (APC) disengagement, it is no longer excluded and can dephosphorylate PLCG1 and LAT to down-regulate prolongation of signaling. Functionally, activates angiogenesis and cell migration. Downregulates the expression of the endothelial adhesion molecules ICAM1 and VCAM1. The sequence is that of Receptor-type tyrosine-protein phosphatase eta (PTPRJ) from Homo sapiens (Human).